The primary structure comprises 474 residues: Putative matrix metalloproteinase (474 aa).

Positions 1–17 (MIIYFAVITCSLKLCRS) are cleaved as a signal peptide. His-189 contributes to the Zn(2+) binding site. Glu-190 is a catalytic residue. Zn(2+) is bound by residues His-193 and His-199. A Hemopexin repeat occupies 299–344 (AGVYDAISYVRGDLYVFVGDLHWRFDTSGMLHNGYPQPTGATWRLP).

The protein belongs to the peptidase M10A family. Zn(2+) is required as a cofactor.

The sequence is that of Putative matrix metalloproteinase from Heliothis virescens ascovirus 3e (HvAV-3e).